The sequence spans 765 residues: Proton-coupled zinc antiporter SLC30A5 (765 aa).

Met1 carries the N-acetylmethionine modification. Over 1-32 (MEEKYGGDVLAGPGGGGGLGPVDVPSARLTKY) the chain is Cytoplasmic. A helical transmembrane segment spans residues 33–53 (IVLLCFTKFLKAVGLFESYDL). Residues 54–56 (LKA) are Lumenal-facing. A helical transmembrane segment spans residues 57 to 77 (VHIVQFIFILKLGTAFFMVLF). Residues 78–98 (QKPFSSGKTITKHQWIKIFKH) are Cytoplasmic-facing. Residues 99-119 (AVAGCIISLLWFFGLTLCGPL) form a helical membrane-spanning segment. Arg120 is a topological domain (lumenal). The helical transmembrane segment at 121–141 (TLLLFEHSDIVVISLLSVLFT) threads the bilayer. Topologically, residues 142–152 (SSGGGPAKTRG) are cytoplasmic. The helical transmembrane segment at 153-173 (AAFFIIAVICLLLFDNDDLMA) threads the bilayer. The Lumenal segment spans residues 174-193 (KMAEHPEGHHDSALTHMLYT). Residues 194–214 (AIAFLGVADHKGGVLLLVLAL) traverse the membrane as a helical segment. Topologically, residues 215–238 (CCKVGFHTASRKLSVDVGGAKRLQ) are cytoplasmic. The helical transmembrane segment at 239 to 259 (ALSHLVSVLLLCPWVIVLSVT) threads the bilayer. At 260–267 (TESKVESW) the chain is on the lumenal side. A helical membrane pass occupies residues 268-288 (FSLIMPFATVIFFVMILDFYV). At 289–303 (DSICSVKMEVSKCAR) the chain is on the cytoplasmic side. A helical membrane pass occupies residues 304 to 324 (YGSFPIFISALLFGNFWTHPI). The Lumenal segment spans residues 325-342 (TDQLRAMNKAAHQESTEH). The helical transmembrane segment at 343–363 (VLSGGVVVSAIFFILSANILS) threads the bilayer. The Cytoplasmic segment spans residues 364–418 (SPSKRGQKGTLIGYSPEGTPLYNFMGDAFQHSSQSIPRFIKESLKQILEESDSRQ). The chain crosses the membrane as a helical span at residues 419–439 (IFYFLCLNLLFTFVELFYGVL). Residues 420–640 (FYFLCLNLLF…ILIFLSVVPL (221 aa)) are mediates homodimerization with SLC30A6. Over 440–448 (TNSLGLISD) the chain is Lumenal. The chain crosses the membrane as a helical span at residues 449–469 (GFHMLFDCSALVMGLFAALMS). Zn(2+) contacts are provided by His451 and Asp455. Residues 470 to 483 (RWKATRIFSYGYGR) are Cytoplasmic-facing. The helical transmembrane segment at 484–504 (IEILSGFINGLFLIVIAFFVF) threads the bilayer. Over 505-520 (MESVARLIDPPELDTH) the chain is Lumenal. Residues 521–541 (MLTPVSVGGLIVNLIGICAFS) form a helical membrane-spanning segment. The interval 542–578 (HAHSHAHGASQGSCHSSDHSHSHHMHGHSDHGHGHSH) is his-rich loop; required for zinc transport. Topologically, residues 542-592 (HAHSHAHGASQGSCHSSDHSHSHHMHGHSDHGHGHSHGSAGGGMNANMRGV) are cytoplasmic. A disordered region spans residues 551 to 581 (SQGSCHSSDHSHSHHMHGHSDHGHGHSHGSA). A helical transmembrane segment spans residues 593–613 (FLHVLADTLGSIGVIVSTVLI). Residues His595 and Asp599 each contribute to the Zn(2+) site. The Lumenal portion of the chain corresponds to 614 to 617 (EQFG). The helical transmembrane segment at 618-638 (WFIADPLCSLFIAILIFLSVV) threads the bilayer. Topologically, residues 639–765 (PLIKDACQVL…KYCKDGTYIM (127 aa)) are cytoplasmic.

It belongs to the cation diffusion facilitator (CDF) transporter (TC 2.A.4) family. SLC30A subfamily. In terms of assembly, heterodimer with SLC30A6/ZNT6; form a functional zinc ion transmembrane transporter. Could homodimerize through the formation of dityrosine bonds upon oxidative stress. As to expression, ubiquitously expressed. Highly expressed in pancreas, liver and kidney. Expressed abundantly in insulin-containing beta cells, undetectable in other endocrine cell types including glucagon-secreting alpha cells and most acinar cells (at protein level).

Its subcellular location is the golgi apparatus. It is found in the golgi stack membrane. The protein resides in the cytoplasmic vesicle. It localises to the COPII-coated vesicle membrane. The protein localises to the secretory vesicle membrane. Its subcellular location is the trans-Golgi network membrane. It is found in the endoplasmic reticulum membrane. The protein resides in the cell membrane. It localises to the apical cell membrane. The enzyme catalyses Zn(2+)(in) + 2 H(+)(out) = Zn(2+)(out) + 2 H(+)(in). Its function is as follows. Together with SLC30A6 forms a functional proton-coupled zinc ion antiporter mediating zinc entry into the lumen of organelles along the secretory pathway. By contributing to zinc ion homeostasis within the early secretory pathway, regulates the activation and folding of enzymes like alkaline phosphatases and enzymes involved in phosphatidylinositol glycan anchor biosynthesis. Through the transport of zinc into secretory granules of pancreatic beta-cells, plays an important role in the storage and secretion of insulin. In terms of biological role, zinc ion:proton antiporter mediating influx and efflux of zinc at the plasma membrane. This Homo sapiens (Human) protein is Proton-coupled zinc antiporter SLC30A5.